We begin with the raw amino-acid sequence, 1997 residues long: Otoferlin (1997 aa).

In terms of domain architecture, C2 1 spans 1–98; the sequence is MALIVHLKTV…VEENRVEVTD (98 aa). The Cytoplasmic segment spans residues 1–1963; sequence MALIVHLKTV…ARYFLWHTYR (1963 aa). A disordered region spans residues 140 to 167; it reads QEEKDSQETDGLLPGSRPSTRISGEKSF. 2 consecutive C2 domains span residues 235 to 356 and 399 to 530; these read KRSK…HKWA and IEGN…FLPT. The interval 643–692 is disordered; sequence VDGMSRPLRPRPRKEPGDEEEVDLIQNSSDDEGDEAGDLASVSSTPPMRP. Residues 659-679 are compositionally biased toward acidic residues; that stretch reads GDEEEVDLIQNSSDDEGDEAG. Positions 791–820 form a coiled coil; the sequence is RERLKSCMRELESMGQQAKSLRAQVKRHTV. 2 consecutive C2 domains span residues 943–1068 and 1115–1241; these read LHSF…PPRF and RGPI…PNWN. Residues Asp975, Asp981, Asp1037, Asp1039, and Asp1045 each contribute to the Ca(2+) site. 3 disordered regions span residues 1253 to 1272, 1296 to 1326, and 1343 to 1402; these read LRNG…SMEP, DVAE…ESML, and LRQH…EKKK. 2 stretches are compositionally biased toward acidic residues: residues 1314 to 1325 and 1352 to 1361; these read EEPEEEEPDESM and DLEEKEEMES. A compositionally biased stretch (basic and acidic residues) spans 1370–1383; sequence KSKEKSRAAKEEKK. C2 domains follow at residues 1464–1593 and 1714–1865; these read LPED…ATCG and DMPA…KQCT. Ca(2+)-binding residues include Asp1508, Asp1514, Asp1563, Asp1565, Asp1571, Asp1836, Ser1839, and Asp1842. The chain crosses the membrane as a helical span at residues 1964–1984; the sequence is WLLLKFLLLFLLLLLFALFLY. Topologically, residues 1985–1997 are extracellular; the sequence is SLPGYLAKKILGA.

Belongs to the ferlin family. In terms of assembly, interacts with SNAP25; the interaction is direct. Interacts with STX1; the interaction is direct. Interacts with RAB8B. Ca(2+) is required as a cofactor. Isoform 1 is expressed in cochlea and brain. Expressed in the cochlear and vestibular hair cells. Expressed in both inner and outer hair cells (IHCs and OHCs) and cochlear ganglions neurons at postnatal day 2 (P2) and 6 (P6). Expressed only in IHCs at postnatal day 60 (P60) (at protein level). Strongly expressed in brain and inner ear. In the inner ear, it is mainly expressed in the cochlear IHC and vestibular type I sensory hair cells. Weakly expressed in eye, heart, skeletal muscle, liver, kidney, lung and testis.

The protein resides in the cytoplasmic vesicle. Its subcellular location is the secretory vesicle. It is found in the synaptic vesicle membrane. It localises to the basolateral cell membrane. The protein localises to the endoplasmic reticulum membrane. The protein resides in the golgi apparatus membrane. Its subcellular location is the presynaptic cell membrane. It is found in the cell membrane. In terms of biological role, key calcium ion sensor involved in the Ca(2+)-triggered synaptic vesicle-plasma membrane fusion and in the control of neurotransmitter release at these output synapses. Interacts in a calcium-dependent manner to the presynaptic SNARE proteins at ribbon synapses of cochlear inner hair cells (IHCs) to trigger exocytosis of neurotransmitter. Also essential to synaptic exocytosis in immature outer hair cells (OHCs). May also play a role within the recycling of endosomes. The sequence is that of Otoferlin (Otof) from Mus musculus (Mouse).